Consider the following 308-residue polypeptide: Glutaminase (308 aa).

Positions 66, 117, 161, 168, 192, 244, and 262 each coordinate substrate.

This sequence belongs to the glutaminase family. As to quaternary structure, homotetramer.

It catalyses the reaction L-glutamine + H2O = L-glutamate + NH4(+). This Photorhabdus laumondii subsp. laumondii (strain DSM 15139 / CIP 105565 / TT01) (Photorhabdus luminescens subsp. laumondii) protein is Glutaminase.